The sequence spans 227 residues: Bone marrow proteoglycan (227 aa).

The first 16 residues, 1-16, serve as a signal peptide directing secretion; that stretch reads MKFPLLLALLVGGAFA. Positions 17–110 are cleaved as a propeptide — acidic; that stretch reads LHLSSEASDS…TSLMGDSGFK (94 aa). The tract at residues 21 to 105 is disordered; the sequence is SEASDSKSPL…KEEDTTSLMG (85 aa). A glycan (O-linked (GalNAc...) serine) is linked at serine 24. Positions 34-46 are enriched in basic and acidic residues; it reads SLPREAEISRPEV. The segment covering 58-70 has biased composition (acidic residues); the sequence is LEEEEEEEEEEGS. Residue serine 70 is glycosylated (O-linked (Xyl...) (chondroitin sulfate) serine). Residues 128–227 enclose the C-type lectin domain; sequence LVCRSCYRGT…GKRRPFICAY (100 aa). 2 disulfide bridges follow: cysteine 130/cysteine 225 and cysteine 202/cysteine 217.

In terms of processing, nitrated.

It is found in the secreted. Cytotoxin and helminthotoxin. MBP also induces non-cytolytic histamine release from basophils. It is involved in antiparasitic defense mechanisms and immune hypersensitivity reactions. The sequence is that of Bone marrow proteoglycan (Prg2) from Rattus norvegicus (Rat).